The sequence spans 312 residues: Very-long-chain 3-oxoacyl-CoA reductase (312 aa).

Residues Ala-4–Leu-24 traverse the membrane as a helical segment. Gly-50–Leu-79 provides a ligand contact to NADP(+). The next 2 helical transmembrane spans lie at Gly-182–Tyr-202 and Gly-271–Leu-291. Ser-189 lines the substrate pocket. Residue Tyr-202 is the Proton acceptor of the active site. A Di-lysine motif motif is present at residues Lys-308 to Asn-312.

It belongs to the short-chain dehydrogenases/reductases (SDR) family. 17-beta-HSD 3 subfamily. Interacts with ELOVL1 and LASS2. Expressed in most tissues tested. Highly expressed in the ovary and mammary. Expressed in platelets.

It localises to the endoplasmic reticulum membrane. It catalyses the reaction a very-long-chain (3R)-3-hydroxyacyl-CoA + NADP(+) = a very-long-chain 3-oxoacyl-CoA + NADPH + H(+). The catalysed reaction is 17beta-estradiol + NAD(+) = estrone + NADH + H(+). The enzyme catalyses 17beta-estradiol + NADP(+) = estrone + NADPH + H(+). It carries out the reaction 3-oxooctadecanoyl-CoA + NADPH + H(+) = (3R)-hydroxyoctadecanoyl-CoA + NADP(+). It catalyses the reaction (7Z,10Z,13Z,16Z)-3-oxodocosatetraenoyl-CoA + NADPH + H(+) = (3R)-hydroxy-(7Z,10Z,13Z,16Z)-docosatetraenoyl-CoA + NADP(+). The catalysed reaction is 3-oxo-(7Z,10Z,13Z,16Z,19Z)-docosapentaenoyl-CoA + NADPH + H(+) = (3R)-hydroxy-(7Z,10Z,13Z,16Z,19Z)-docosapentaenoyl-CoA + NADP(+). The enzyme catalyses (8Z,11Z,14Z)-3-oxoeicosatrienoyl-CoA + NADPH + H(+) = (3R)-hydroxy-(8Z,11Z,14Z)-eicosatrienoyl-CoA + NADP(+). It functions in the pathway lipid metabolism; fatty acid biosynthesis. Its pathway is steroid biosynthesis; estrogen biosynthesis. Its function is as follows. Catalyzes the second of the four reactions of the long-chain fatty acids elongation cycle. This endoplasmic reticulum-bound enzymatic process, allows the addition of two carbons to the chain of long- and very long-chain fatty acids/VLCFAs per cycle. This enzyme has a 3-ketoacyl-CoA reductase activity, reducing 3-ketoacyl-CoA to 3-hydroxyacyl-CoA, within each cycle of fatty acid elongation. Thereby, it may participate in the production of VLCFAs of different chain lengths that are involved in multiple biological processes as precursors of membrane lipids and lipid mediators. May also catalyze the transformation of estrone (E1) into estradiol (E2) and play a role in estrogen formation. The sequence is that of Very-long-chain 3-oxoacyl-CoA reductase from Homo sapiens (Human).